Here is a 151-residue protein sequence, read N- to C-terminus: Ribosome maturation factor RimP (151 aa).

Belongs to the RimP family.

The protein resides in the cytoplasm. Required for maturation of 30S ribosomal subunits. This is Ribosome maturation factor RimP from Pseudoalteromonas translucida (strain TAC 125).